Consider the following 879-residue polypeptide: Protein translocase subunit SecA (879 aa).

Residues glutamine 87, 105–109, and aspartate 509 each bind ATP; that span reads GEGKT. Positions 834-879 are disordered; sequence IAEDSEKLKPITGTKKPKRNDPCPCGSGKKYKNCCGQSGPKKGLLA. Zn(2+)-binding residues include cysteine 856, cysteine 858, cysteine 867, and cysteine 868.

Belongs to the SecA family. In terms of assembly, monomer and homodimer. Part of the essential Sec protein translocation apparatus which comprises SecA, SecYEG and auxiliary proteins SecDF-YajC and YidC. Zn(2+) serves as cofactor.

The protein localises to the cell inner membrane. Its subcellular location is the cytoplasm. It catalyses the reaction ATP + H2O + cellular proteinSide 1 = ADP + phosphate + cellular proteinSide 2.. Its function is as follows. Part of the Sec protein translocase complex. Interacts with the SecYEG preprotein conducting channel. Has a central role in coupling the hydrolysis of ATP to the transfer of proteins into and across the cell membrane, serving as an ATP-driven molecular motor driving the stepwise translocation of polypeptide chains across the membrane. The protein is Protein translocase subunit SecA of Sulfurovum sp. (strain NBC37-1).